Here is a 493-residue protein sequence, read N- to C-terminus: Probable fatty acyl-CoA reductase 4 (493 aa).

The protein belongs to the fatty acyl-CoA reductase family. As to expression, expressed in the endodermal cell layer surrounding the central vasculature in roots. Expressed in the hilum region of seeds. Expressed in stamen filaments and receptacle of siliques.

The enzyme catalyses a long-chain fatty acyl-CoA + 2 NADPH + 2 H(+) = a long-chain primary fatty alcohol + 2 NADP(+) + CoA. Functionally, catalyzes the reduction of fatty acyl-CoA to fatty alcohols. Catalyzes specifically the formation of C18:0 and C20:0 fatty alcohols. Provides the fatty alcohols required for synthesis of suberin in roots, seed coat and wound-induced leaf tissue. Provides the fatty alcohols required for synthesis of alkyl hydroxycinnamates in root waxes. The chain is Probable fatty acyl-CoA reductase 4 from Arabidopsis thaliana (Mouse-ear cress).